The following is a 127-amino-acid chain: Small ribosomal subunit protein uS12 (127 aa).

Residues 11 to 20 are compositionally biased toward basic residues; it reads GRKPKKKKSK. The segment at 11–30 is disordered; that stretch reads GRKPKKKKSKAPALQGNPQK. Position 89 is a 3-methylthioaspartic acid (D89). The segment at 105–127 is disordered; that stretch reads AGVEGRRQSRSKYGAKRPKDQKK. The span at 112-127 shows a compositional bias: basic residues; it reads QSRSKYGAKRPKDQKK.

Belongs to the universal ribosomal protein uS12 family. In terms of assembly, part of the 30S ribosomal subunit. Contacts proteins S8 and S17. May interact with IF1 in the 30S initiation complex.

Functionally, with S4 and S5 plays an important role in translational accuracy. Its function is as follows. Interacts with and stabilizes bases of the 16S rRNA that are involved in tRNA selection in the A site and with the mRNA backbone. Located at the interface of the 30S and 50S subunits, it traverses the body of the 30S subunit contacting proteins on the other side and probably holding the rRNA structure together. The combined cluster of proteins S8, S12 and S17 appears to hold together the shoulder and platform of the 30S subunit. The chain is Small ribosomal subunit protein uS12 from Thermotoga maritima (strain ATCC 43589 / DSM 3109 / JCM 10099 / NBRC 100826 / MSB8).